The primary structure comprises 286 residues: Pyridoxal kinase PdxY (286 aa).

Substrate-binding positions include serine 9 and 44–45; that span reads MQ. Residues aspartate 111, glutamate 147, and lysine 180 each coordinate ATP. Residue aspartate 221 coordinates substrate.

Belongs to the pyridoxine kinase family. PdxY subfamily. In terms of assembly, homodimer. The cofactor is Mg(2+).

It catalyses the reaction pyridoxal + ATP = pyridoxal 5'-phosphate + ADP + H(+). The protein operates within cofactor metabolism; pyridoxal 5'-phosphate salvage; pyridoxal 5'-phosphate from pyridoxal: step 1/1. Pyridoxal kinase involved in the salvage pathway of pyridoxal 5'-phosphate (PLP). Catalyzes the phosphorylation of pyridoxal to PLP. The polypeptide is Pyridoxal kinase PdxY (Burkholderia lata (strain ATCC 17760 / DSM 23089 / LMG 22485 / NCIMB 9086 / R18194 / 383)).